The sequence spans 3623 residues: Cubilin (3623 aa).

A signal peptide spans 1 to 23 (MMNMSLPFLWSLLTLLIFAEVNG). The propeptide at 24 to 35 (EAGELELQRQKR) is removed in mature form. An interaction with AMN region spans residues 42-49 (PRMATERG). N-linked (GlcNAc...) asparagine glycosylation is present at N105. Positions 132-168 (DKKVCSSNPCQNGGTCLNLHDSFFCICPPQWKGPLCS) constitute an EGF-like 1 domain. 9 cysteine pairs are disulfide-bonded: C136-C147, C141-C156, C158-C167, C174-C190, C184-C199, C201-C210, C267-C280, C274-C289, and C292-C303. Residues 170–211 (DVNECEIYSGTPLSCQNGGTCVNTMGSYSCHCPPETYGPQCA) enclose the EGF-like 2; calcium-binding domain. The EGF-like 3; calcium-binding domain maps to 263-304 (DRDECSFQPGPCSTLVQCFNTQGSFYCGACPTGWQGNGYICE). One can recognise an EGF-like 4; calcium-binding domain in the interval 305 to 348 (DINECEINNGGCSVAPPVECVNTPGSSHCQACPPGYQGDGRVCT). 2 consecutive EGF-like domains span residues 349–385 (LTDI…YTGN) and 395–430 (LSNI…VNCT). Disulfide bonds link C353/C366, C360/C376, C399/C409, C404/C418, C420/C429, C436/C447, C441/C456, C458/C467, C474/C500, C527/C549, C590/C616, C643/C665, and C708/C734. N428 carries an N-linked (GlcNAc...) asparagine glycan. Residues 432–468 (NINECLSNPCLNGGTCVDGVDSFSCECTRLWTGALCQ) form the EGF-like 7; calcium-binding domain. 27 CUB domains span residues 474–586 (CGES…WETQ), 590–702 (CGGI…YLTS), 708–816 (CGGN…YQVA), 816–928 (ACGD…FSAE), 932–1042 (CGEI…YEAI), 1048–1161 (CLQD…WDGS), 1165–1277 (CGGN…YRQT), 1278–1389 (CENV…WFVY), 1391–1506 (CGGE…WQAV), 1510–1619 (CGGI…FRQA), 1620–1734 (CGGH…VTAS), 1738–1850 (CGGT…FMKI), 1852–1963 (GNDN…WFAV), 1978–2091 (CGGF…FHKS), 2092–2213 (CGGY…YEAK), 2217–2334 (CGGN…YSIA), 2336–2448 (CGGR…FESS), 2452–2565 (CGGD…YTSS), 2570–2687 (CGGS…YSFT), 2689–2801 (CGGI…WNTQ), 2805–2919 (CGGI…FVSR), 2920–3035 (CGSN…YRII), 3037–3150 (CGGV…FRQT), 3157–3274 (CGGY…YTIM), 3278–3393 (CGGT…YQIA), 3395–3507 (CNRD…WTSS), and 3511–3623 (CGGT…TWDS). N482 carries N-linked (GlcNAc...) asparagine glycosylation. N-linked (GlcNAc...) asparagine glycosylation is found at N711, N749, N781, and N857. 2 disulfides stabilise this stretch: C869-C891 and C932-C958. N957 is a glycosylation site (N-linked (GlcNAc...) asparagine). E980 contributes to the Ca(2+) binding site. A glycan (N-linked (GlcNAc...) asparagine) is linked at N984. C985 and C1005 are disulfide-bonded. Residues D988, D1027, D1029, and L1030 each contribute to the Ca(2+) site. C1048 and C1074 are joined by a disulfide. N-linked (GlcNAc...) asparagine glycosylation occurs at N1092. Ca(2+) contacts are provided by E1096, D1105, D1146, I1148, and D1149. A disulfide bridge connects residues C1165 and C1191. Residue N1168 is glycosylated (N-linked (GlcNAc...) asparagine). E1213 contributes to the Ca(2+) binding site. N1217 carries N-linked (GlcNAc...) asparagine glycosylation. The cysteines at positions 1218 and 1240 are disulfide-linked. Residues D1221, D1262, G1264, and Q1265 each coordinate Ca(2+). A disulfide bridge connects residues C1278 and C1306. N-linked (GlcNAc...) asparagine glycans are attached at residues N1285, N1307, and N1319. E1328 serves as a coordination point for Ca(2+). N1332 is a glycosylation site (N-linked (GlcNAc...) asparagine). The cysteines at positions 1333 and 1351 are disulfide-linked. Residues D1336, D1373, and V1375 each contribute to the Ca(2+) site. Disulfide bonds link C1391/C1417 and C1444/C1466. Residue N1500 is glycosylated (N-linked (GlcNAc...) asparagine). C1510 and C1536 are oxidised to a cystine. An N-linked (GlcNAc...) asparagine glycan is attached at N1551. Cystine bridges form between C1563–C1581, C1620–C1647, C1675–C1697, C1738–C1764, and C1791–C1812. Residue N1646 is glycosylated (N-linked (GlcNAc...) asparagine). N-linked (GlcNAc...) asparagine glycans are attached at residues N1802, N1819, and N1885. Intrachain disulfides connect C1905–C1927, C1978–C2006, and C2032–C2054. Residues N2085 and N2117 are each glycosylated (N-linked (GlcNAc...) asparagine). Disulfide bonds link C2092–C2118 and C2217–C2247. N-linked (GlcNAc...) asparagine glycosylation occurs at N2274. Disulfide bonds link C2275–C2297 and C2336–C2363. N2386 and N2400 each carry an N-linked (GlcNAc...) asparagine glycan. Intrachain disulfides connect C2390/C2411, C2452/C2478, and C2505/C2527. 4 N-linked (GlcNAc...) asparagine glycosylation sites follow: N2531, N2581, N2592, and N2610. A disulfide bridge connects residues C2570 and C2599. Disulfide bonds link C2628-C2649, C2689-C2715, C2742-C2764, C2805-C2831, C2860-C2883, C2920-C2946, and C2977-C2999. N2813 carries an N-linked (GlcNAc...) asparagine glycan. N-linked (GlcNAc...) asparagine glycosylation is found at N2923 and N2945. At T3008 the chain carries Phosphothreonine. Cystine bridges form between C3037–C3064 and C3091–C3113. 4 N-linked (GlcNAc...) asparagine glycosylation sites follow: N3042, N3103, N3125, and N3165. Cystine bridges form between C3157/C3185 and C3215/C3237. N3268, N3283, N3290, and N3295 each carry an N-linked (GlcNAc...) asparagine glycan. 2 disulfides stabilise this stretch: C3278–C3306 and C3332–C3354. N-linked (GlcNAc...) asparagine glycosylation occurs at N3357. C3395 and C3421 form a disulfide bridge. N-linked (GlcNAc...) asparagine glycans are attached at residues N3430, N3457, N3533, and N3576. 3 disulfides stabilise this stretch: C3448–C3470, C3511–C3537, and C3564–C3586.

As to quaternary structure, interacts with AMN. Component of the cubam complex composed of one CUBN trimer and one AMN chain. The cubam complex can dimerize. Interacts with LRP2 in a dual-receptor complex in a calcium-dependent manner. Found in a complex with PID1/PCLI1, LRP1 and CUBNI. Interacts with LRP1 and PID1/PCLI1. In terms of processing, the precursor is cleaved by a trans-Golgi proteinase furin, removing a propeptide. Post-translationally, N-glycosylated. Detected in kidney cortex (at protein level). Expressed in kidney proximal tubule cells, placenta, visceral yolk-sac cells and in absorptive intestinal cells. Expressed in the epithelium of intestine and kidney.

Its subcellular location is the apical cell membrane. The protein localises to the cell membrane. It localises to the membrane. It is found in the coated pit. The protein resides in the endosome. Its subcellular location is the lysosome membrane. In terms of biological role, endocytic receptor which plays a role in lipoprotein, vitamin and iron metabolism by facilitating their uptake. Acts together with LRP2 to mediate endocytosis of high-density lipoproteins, GC, hemoglobin, ALB, TF and SCGB1A1. Acts together with AMN to mediate endocytosis of the CBLIF-cobalamin complex. Binds to ALB, MB, Kappa and lambda-light chains, TF, hemoglobin, GC, SCGB1A1, APOA1, high density lipoprotein, and the CBLIF-cobalamin complex. Ligand binding requires calcium. Serves as important transporter in several absorptive epithelia, including intestine, renal proximal tubules and embryonic yolk sac. May play an important role in the development of the peri-implantation embryo through internalization of APOA1 and cholesterol. Binds to LGALS3 at the maternal-fetal interface. The chain is Cubilin (CUBN) from Homo sapiens (Human).